We begin with the raw amino-acid sequence, 134 residues long: Retinol-binding protein 2 (134 aa).

Positions 41 and 109 each coordinate all-trans-retinol.

It belongs to the calycin superfamily. Fatty-acid binding protein (FABP) family.

The protein localises to the cytoplasm. Functionally, intracellular transport of retinol. In Sus scrofa (Pig), this protein is Retinol-binding protein 2 (RBP2).